Consider the following 190-residue polypeptide: Hypoxanthine/guanine phosphoribosyltransferase (190 aa).

Belongs to the purine/pyrimidine phosphoribosyltransferase family. Archaeal HPRT subfamily. Homodimer.

The protein resides in the cytoplasm. The enzyme catalyses IMP + diphosphate = hypoxanthine + 5-phospho-alpha-D-ribose 1-diphosphate. It catalyses the reaction GMP + diphosphate = guanine + 5-phospho-alpha-D-ribose 1-diphosphate. Its pathway is purine metabolism; IMP biosynthesis via salvage pathway; IMP from hypoxanthine: step 1/1. Catalyzes a salvage reaction resulting in the formation of IMP that is energically less costly than de novo synthesis. This chain is Hypoxanthine/guanine phosphoribosyltransferase, found in Methanohalobium evestigatum (strain ATCC BAA-1072 / DSM 3721 / NBRC 107634 / OCM 161 / Z-7303).